A 569-amino-acid chain; its full sequence is Cationic amino acid transporter 9, chloroplastic (569 aa).

Residues 1 to 41 (MGGHEGFSNQRLSSATWFSHFRASALRSKSLPPPSSQTAVR) constitute a chloroplast transit peptide. A run of 14 helical transmembrane segments spans residues 53 to 73 (GLFD…VFVV), 81 to 101 (AGPG…LNAL), 113 to 135 (VVGG…LVFV), 155 to 175 (YAVA…LWMG), 181 to 201 (LGGL…LTLV), 215 to 235 (VMTA…AFEI), 250 to 270 (AVLT…AVAN), 284 to 304 (IGIM…CLVL), 333 to 353 (ILIS…GLYV), 406 to 428 (HILS…ALRL), 444 to 464 (WQEG…AGVF), 467 to 487 (FSAS…ASAV), 502 to 522 (FSCP…IFLF), and 528 to 548 (EAWI…ALYG).

Belongs to the amino acid-polyamine-organocation (APC) superfamily. Cationic amino acid transporter (CAT) (TC 2.A.3.3) family. Expressed in roots, stems, flowers, and leaves.

The protein resides in the plastid. The protein localises to the chloroplast membrane. In terms of biological role, permease involved in the transport of the cationic amino acids. The polypeptide is Cationic amino acid transporter 9, chloroplastic (CAT9) (Arabidopsis thaliana (Mouse-ear cress)).